The primary structure comprises 94 residues: Large ribosomal subunit protein bL27 (94 aa).

Positions 1 to 9 (MLELNLQLF) are excised as a propeptide. The interval 12–33 (KKGGGSTSNGRDSQAKRLGAKA) is disordered.

This sequence belongs to the bacterial ribosomal protein bL27 family. In terms of processing, the N-terminus is cleaved by ribosomal processing cysteine protease Prp.

This Lactococcus lactis subsp. lactis (strain IL1403) (Streptococcus lactis) protein is Large ribosomal subunit protein bL27.